The primary structure comprises 135 residues: Transcriptional activator protein (135 aa).

Positions 17–32 match the Nuclear localization signal motif; sequence KVTHRQVKKRAIRRRR. A zinc finger lies at 37 to 54; it reads CGCSYYLHINCFNHGFTH. Residues 77–88 are compositionally biased toward polar residues; the sequence is VFHNHQAPTTTI. Residues 77–117 form a disordered region; the sequence is VFHNHQAPTTTIPAEPGHHNSPGSIQSQPEEGAGDSQMFSQ. Residues 120–135 form a transactivation region; it reads DLDNLTASDWSFLKGL.

The protein belongs to the geminiviridae transcriptional activator protein family. Monomer. Homodimer. Homooligomer. Self-interaction correlates with nuclear localization and efficient activation of transcription. Monomers suppress local silencing by interacting with and inactivating host adenosine kinase 2 (ADK2) in the cytoplasm. Interacts with and inhibits host SNF1 kinase. Binds to ssDNA. In terms of processing, phosphorylated.

Its subcellular location is the host nucleus. It is found in the host cytoplasm. Functionally, strong activator of the late viral genes promoters. Enhances the expression of the capsid protein and nuclear shuttle protein. Acts as a suppressor of RNA-mediated gene silencing, also known as post-transcriptional gene silencing (PTGS), a mechanism of plant viral defense that limits the accumulation of viral RNAs. Suppresses the host RNA silencing by inhibiting adenosine kinase 2 (ADK2), a kinase involved in a general methylation pathway. Also suppresses the host basal defense by interacting with and inhibiting SNF1 kinase, a key regulator of cell metabolism implicated in innate antiviral defense. Determines pathogenicity. In Hewittia sublobata (Coralbush), this protein is Transcriptional activator protein.